The sequence spans 367 residues: 2-aminoethylphosphonate--pyruvate transaminase (367 aa).

The residue at position 193 (Lys193) is an N6-(pyridoxal phosphate)lysine.

Belongs to the class-V pyridoxal-phosphate-dependent aminotransferase family. PhnW subfamily. In terms of assembly, homodimer. It depends on pyridoxal 5'-phosphate as a cofactor.

It carries out the reaction (2-aminoethyl)phosphonate + pyruvate = phosphonoacetaldehyde + L-alanine. In terms of biological role, involved in phosphonate degradation. This chain is 2-aminoethylphosphonate--pyruvate transaminase, found in Vibrio vulnificus (strain YJ016).